We begin with the raw amino-acid sequence, 101 residues long: MAPATRSLLRAPLLLLLLLLATSRLATGAPVANELRCQCLQTMTGVHLKNIQSLKVTPPGPHCTQTEVIATLKNGQEACLNPEAPMVQKIVQKMLKSGIRK.

Positions 1 to 28 are cleaved as a signal peptide; it reads MAPATRSLLRAPLLLLLLLLATSRLATG. Intrachain disulfides connect cysteine 37–cysteine 63 and cysteine 39–cysteine 79.

This sequence belongs to the intercrine alpha (chemokine CxC) family.

The protein localises to the secreted. Has chemotactic activity for neutrophils. The polypeptide is Growth-regulated alpha protein (CXCL1) (Cricetulus griseus (Chinese hamster)).